The chain runs to 123 residues: MDSKDHRNELNRFFKSFVHAGRGIWETARTERNFQFHAAAACAVLICGFLVELSIIEWMIIFLLIGGMFSLELLNTAIEHTVDLITDKHHPLAKAAKDAAAGAVCVFAVISCIIGLLIFLPKL.

Over 1–33 the chain is Cytoplasmic; the sequence is MDSKDHRNELNRFFKSFVHAGRGIWETARTERN. Residues 34 to 51 traverse the membrane as a helical segment; sequence FQFHAAAACAVLICGFLV. Residues 52-57 are Extracellular-facing; sequence ELSIIE. A helical transmembrane segment spans residues 58–74; it reads WMIIFLLIGGMFSLELL. The Cytoplasmic segment spans residues 75 to 99; the sequence is NTAIEHTVDLITDKHHPLAKAAKDA. Residues 100–120 form a helical membrane-spanning segment; sequence AAGAVCVFAVISCIIGLLIFL. Topologically, residues 121-123 are extracellular; that stretch reads PKL.

Belongs to the bacterial diacylglycerol kinase family.

Its subcellular location is the cell membrane. It catalyses the reaction di-trans,octa-cis-undecaprenol + ATP = di-trans,octa-cis-undecaprenyl phosphate + ADP + H(+). Its function is as follows. Catalyzes the phosphorylation of undecaprenol in vitro, which is probably the physiological substrate. Exhibits no detectable activity against other substrates such as monoacylglycerol, ceramide, or diacylglycerol (DAG). Appears indispensable for the maintenance of spore stability and viability in B.subtilis. This Bacillus subtilis (strain 168) protein is Undecaprenol kinase (dgkA).